We begin with the raw amino-acid sequence, 41 residues long: Bacteriocin bavaricin-A (41 aa).

It belongs to the bacteriocin class IIA/YGNGV family.

It localises to the secreted. This heat stable bacteriocin shows activity against species of Lactobacillus, Listeria monocytogenes, Pediococcus, Enterococcus, Leuconostoc and Lactococcus. This chain is Bacteriocin bavaricin-A, found in Latilactobacillus sakei (Lactobacillus sakei).